We begin with the raw amino-acid sequence, 162 residues long: MFIDTSELCDLYAEQVDVVEPIFSSFGGVSHFYGKVTTVKCFESNGLIAEVLEENGEGRVLVIDGGGAVRRGLIDAELAQLAVDNGWEGIIVYGAVRQIQQLENLDIGIHALAPIPVSADESSAGESDIPVNFGGVTFFPEDYIYADLTGIILSQEPLDLED.

The protein belongs to the RraA family. Homotrimer. Binds to both RNA-binding sites in the C-terminal region of Rne and to RhlB.

The protein localises to the cytoplasm. Globally modulates RNA abundance by binding to RNase E (Rne) and regulating its endonucleolytic activity. Can modulate Rne action in a substrate-dependent manner by altering the composition of the degradosome. Modulates RNA-binding and helicase activities of the degradosome. This Haemophilus influenzae (strain 86-028NP) protein is Regulator of ribonuclease activity A.